The primary structure comprises 161 residues: MAAAIGLRVVGRRLGLGLGRTPRRALWGGHSKKEEKEVEENSIIPQEKKEPSLICPPPRSRKYVPPENIQSILEARVKEICGPSLAGNWLQTSLKDNRLKYQLLAQLAAELGHAVPNSQLHLMCSAQDVLTFYSTPVKDMLKFDELCAAELPPNLKIAWER.

The segment at Trp27–Pro51 is disordered.

The protein belongs to the mitochondrion-specific ribosomal protein mL50 family. In terms of assembly, component of the mitochondrial ribosome large subunit (39S) which comprises a 16S rRNA and about 50 distinct proteins.

The protein localises to the mitochondrion. In Gallus gallus (Chicken), this protein is Large ribosomal subunit protein mL50 (MRPL50).